The following is a 473-amino-acid chain: Aspartyl/glutamyl-tRNA(Asn/Gln) amidotransferase subunit B (473 aa).

This sequence belongs to the GatB/GatE family. GatB subfamily. Heterotrimer of A, B and C subunits.

The enzyme catalyses L-glutamyl-tRNA(Gln) + L-glutamine + ATP + H2O = L-glutaminyl-tRNA(Gln) + L-glutamate + ADP + phosphate + H(+). The catalysed reaction is L-aspartyl-tRNA(Asn) + L-glutamine + ATP + H2O = L-asparaginyl-tRNA(Asn) + L-glutamate + ADP + phosphate + 2 H(+). Its function is as follows. Allows the formation of correctly charged Asn-tRNA(Asn) or Gln-tRNA(Gln) through the transamidation of misacylated Asp-tRNA(Asn) or Glu-tRNA(Gln) in organisms which lack either or both of asparaginyl-tRNA or glutaminyl-tRNA synthetases. The reaction takes place in the presence of glutamine and ATP through an activated phospho-Asp-tRNA(Asn) or phospho-Glu-tRNA(Gln). This chain is Aspartyl/glutamyl-tRNA(Asn/Gln) amidotransferase subunit B, found in Francisella tularensis subsp. tularensis (strain FSC 198).